The chain runs to 348 residues: Flap endonuclease 1 (348 aa).

The interval Met1–Lys98 is N-domain. Mg(2+)-binding residues include Asp28, Asp80, Glu149, Glu151, Asp170, Asp172, and Asp234. The segment at Glu113–Gly256 is I-domain. The tract at residues Arg340–Phe348 is interaction with PCNA.

This sequence belongs to the XPG/RAD2 endonuclease family. FEN1 subfamily. Interacts with PCNA. PCNA stimulates the nuclease activity without altering cleavage specificity. Mg(2+) is required as a cofactor.

In terms of biological role, structure-specific nuclease with 5'-flap endonuclease and 5'-3' exonuclease activities involved in DNA replication and repair. During DNA replication, cleaves the 5'-overhanging flap structure that is generated by displacement synthesis when DNA polymerase encounters the 5'-end of a downstream Okazaki fragment. Binds the unpaired 3'-DNA end and kinks the DNA to facilitate 5' cleavage specificity. Cleaves one nucleotide into the double-stranded DNA from the junction in flap DNA, leaving a nick for ligation. Also involved in the base excision repair (BER) pathway. Acts as a genome stabilization factor that prevents flaps from equilibrating into structures that lead to duplications and deletions. Also possesses 5'-3' exonuclease activity on nicked or gapped double-stranded DNA. The polypeptide is Flap endonuclease 1 (Methanopyrus kandleri (strain AV19 / DSM 6324 / JCM 9639 / NBRC 100938)).